The following is a 218-amino-acid chain: Ras-related protein Rab-4A (218 aa).

The GDP site is built by Gly-23, Thr-24, Gly-25, Lys-26, Ser-27, and Cys-28. GTP is bound by residues Gly-23, Thr-24, Gly-25, Lys-26, Ser-27, Cys-28, Ser-42, His-44, and Thr-45. Ser-27 serves as a coordination point for Mg(2+). The Switch 1 motif lies at 44 to 49; that stretch reads HTIGVE. Mg(2+) contacts are provided by Thr-45 and Asp-68. The short motif at 70–79 is the Switch 2 element; it reads AGQERFRSVT. Gly-71 lines the GTP pocket. 5-glutamyl serotonin is present on Gln-72. Residues Asn-126, Lys-127, Asp-129, Ala-157, and Leu-158 each coordinate GDP. Residues Asn-126, Lys-127, Asp-129, Ala-157, and Leu-158 each coordinate GTP. Ser-190 is modified (phosphoserine). At Ser-204 the chain carries Phosphoserine; by CDK1. S-geranylgeranyl cysteine attachment occurs at residues Cys-216 and Cys-218. The residue at position 218 (Cys-218) is a Cysteine methyl ester.

The protein belongs to the small GTPase superfamily. Rab family. Interacts with SGSM1, SGSM2 and SGSM3. Interacts with RAB11FIP1, RABEP1, ZFYVE20 and RUFY1. Interacts (membrane-bound form) with NDRG1; the interaction involves NDRG1 in vesicular recycling of E-cadherin. Interacts (in GTP-bound form) with GRIPAP1 (via N-terminus). Interacts with RABEP1 and RBSN. Does not interact with HPS4. Interacts with RABEP2; this interaction may mediate VEGFR2 cell surface expression. Mg(2+) serves as cofactor. Phosphorylated by CDK1 kinase during mitosis. Post-translationally, serotonylation of Gln-72 by TGM2 during activation and aggregation of platelets leads to constitutive activation of GTPase activity.

It is found in the membrane. The protein resides in the cytoplasm. The protein localises to the early endosome membrane. Its subcellular location is the recycling endosome membrane. The catalysed reaction is GTP + H2O = GDP + phosphate + H(+). With respect to regulation, regulated by guanine nucleotide exchange factors (GEFs) which promote the exchange of bound GDP for free GTP. Regulated by GTPase activating proteins (GAPs) which increase the GTP hydrolysis activity. Inhibited by GDP dissociation inhibitors (GDIs). The small GTPases Rab are key regulators of intracellular membrane trafficking, from the formation of transport vesicles to their fusion with membranes. Rabs cycle between an inactive GDP-bound form and an active GTP-bound form that is able to recruit to membranes different sets of downstream effectors directly responsible for vesicle formation, movement, tethering and fusion. RAB4A is involved in protein transport. Also plays a role in vesicular traffic. Mediates VEGFR2 endosomal trafficking to enhance VEGFR2 signaling. Acts as a regulator of platelet alpha-granule release during activation and aggregation of platelets. The polypeptide is Ras-related protein Rab-4A (Homo sapiens (Human)).